The following is a 64-amino-acid chain: Makatoxin-1 (64 aa).

One can recognise an LCN-type CS-alpha/beta domain in the interval 2-64 (RDAYIADSEN…VPIRISGSCR (63 aa)). 4 cysteine pairs are disulfide-bonded: cysteine 12–cysteine 63, cysteine 16–cysteine 36, cysteine 22–cysteine 46, and cysteine 26–cysteine 48.

In terms of tissue distribution, expressed by the venom gland.

It localises to the secreted. This protein markedly relaxes the rat carbachol-precontracted anococcygeus muscle. This relaxation is inhibited by the inhibitor of nitric oxide (NO) synthase, N-nitro-L-arginine methyl ester (L-NAME), suggesting that the response induced by this protein is NO-mediated. The polypeptide is Makatoxin-1 (Olivierus martensii (Manchurian scorpion)).